The primary structure comprises 311 residues: Aspartate carbamoyltransferase catalytic subunit (311 aa).

The carbamoyl phosphate site is built by arginine 55 and threonine 56. Lysine 85 provides a ligand contact to L-aspartate. Residues arginine 106, histidine 135, and glutamine 138 each contribute to the carbamoyl phosphate site. 2 residues coordinate L-aspartate: arginine 168 and arginine 230. Leucine 268 and proline 269 together coordinate carbamoyl phosphate.

The protein belongs to the aspartate/ornithine carbamoyltransferase superfamily. ATCase family. As to quaternary structure, heterododecamer (2C3:3R2) of six catalytic PyrB chains organized as two trimers (C3), and six regulatory PyrI chains organized as three dimers (R2).

The catalysed reaction is carbamoyl phosphate + L-aspartate = N-carbamoyl-L-aspartate + phosphate + H(+). It functions in the pathway pyrimidine metabolism; UMP biosynthesis via de novo pathway; (S)-dihydroorotate from bicarbonate: step 2/3. Catalyzes the condensation of carbamoyl phosphate and aspartate to form carbamoyl aspartate and inorganic phosphate, the committed step in the de novo pyrimidine nucleotide biosynthesis pathway. In Cronobacter sakazakii (strain ATCC BAA-894) (Enterobacter sakazakii), this protein is Aspartate carbamoyltransferase catalytic subunit.